Here is a 1059-residue protein sequence, read N- to C-terminus: Carbamoyl phosphate synthase large chain (1059 aa).

The tract at residues 1 to 401 (MPKRKDIQKI…SLLKACRSLE (401 aa)) is carboxyphosphate synthetic domain. ATP-binding residues include arginine 129, arginine 169, glycine 175, glycine 176, arginine 208, isoleucine 210, glutamate 215, glycine 241, isoleucine 242, histidine 243, glutamine 284, and glutamate 298. In terms of domain architecture, ATP-grasp 1 spans 133-327 (KQLMEELGQP…IAKLAAKIAV (195 aa)). Residues glutamine 284, glutamate 298, and asparagine 300 each contribute to the Mg(2+) site. The Mn(2+) site is built by glutamine 284, glutamate 298, and asparagine 300. The oligomerization domain stretch occupies residues 402–546 (VGVDHNELPA…YSTYGFENES (145 aa)). The interval 547 to 929 (VKSSKESVLV…ALYKAFEASY (383 aa)) is carbamoyl phosphate synthetic domain. The ATP-grasp 2 domain occupies 671–861 (EQALKELDIP…MAQVATRLIL (191 aa)). Arginine 707, serine 746, isoleucine 748, glutamate 752, glycine 777, valine 778, histidine 779, serine 780, glutamine 820, and glutamate 832 together coordinate ATP. Positions 820, 832, and 834 each coordinate Mg(2+). Residues glutamine 820, glutamate 832, and asparagine 834 each coordinate Mn(2+). Residues 930–1059 (LHLPNFGNVV…ESRSFTTEAI (130 aa)) form the MGS-like domain. An allosteric domain region spans residues 930–1059 (LHLPNFGNVV…ESRSFTTEAI (130 aa)).

It belongs to the CarB family. Composed of two chains; the small (or glutamine) chain promotes the hydrolysis of glutamine to ammonia, which is used by the large (or ammonia) chain to synthesize carbamoyl phosphate. Tetramer of heterodimers (alpha,beta)4. It depends on Mg(2+) as a cofactor. The cofactor is Mn(2+).

It carries out the reaction hydrogencarbonate + L-glutamine + 2 ATP + H2O = carbamoyl phosphate + L-glutamate + 2 ADP + phosphate + 2 H(+). The enzyme catalyses hydrogencarbonate + NH4(+) + 2 ATP = carbamoyl phosphate + 2 ADP + phosphate + 2 H(+). It participates in amino-acid biosynthesis; L-arginine biosynthesis; carbamoyl phosphate from bicarbonate: step 1/1. Its pathway is pyrimidine metabolism; UMP biosynthesis via de novo pathway; (S)-dihydroorotate from bicarbonate: step 1/3. Functionally, large subunit of the glutamine-dependent carbamoyl phosphate synthetase (CPSase). CPSase catalyzes the formation of carbamoyl phosphate from the ammonia moiety of glutamine, carbonate, and phosphate donated by ATP, constituting the first step of 2 biosynthetic pathways, one leading to arginine and/or urea and the other to pyrimidine nucleotides. The large subunit (synthetase) binds the substrates ammonia (free or transferred from glutamine from the small subunit), hydrogencarbonate and ATP and carries out an ATP-coupled ligase reaction, activating hydrogencarbonate by forming carboxy phosphate which reacts with ammonia to form carbamoyl phosphate. This Streptococcus gordonii (strain Challis / ATCC 35105 / BCRC 15272 / CH1 / DL1 / V288) protein is Carbamoyl phosphate synthase large chain.